A 113-amino-acid polypeptide reads, in one-letter code: Non-specific lipid-transfer protein 6 (113 aa).

An N-terminal signal peptide occupies residues 1-19; it reads MRSLLLAVCLVLALHCGEA. Cystine bridges form between Cys-23-Cys-70, Cys-33-Cys-47, Cys-48-Cys-95, and Cys-68-Cys-109.

This sequence belongs to the plant LTP family.

In terms of biological role, plant non-specific lipid-transfer proteins transfer phospholipids as well as galactolipids across membranes. May play a role in wax or cutin deposition in the cell walls of expanding epidermal cells and certain secretory tissues. The polypeptide is Non-specific lipid-transfer protein 6 (LTP6) (Arabidopsis thaliana (Mouse-ear cress)).